A 321-amino-acid polypeptide reads, in one-letter code: Ubiquinone biosynthesis O-methyltransferase, mitochondrial (321 aa).

Arg-102, Gly-135, Asp-157, and Leu-210 together coordinate S-adenosyl-L-methionine. Mg(2+) contacts are provided by Glu-211, Glu-214, and His-215.

It belongs to the class I-like SAM-binding methyltransferase superfamily. UbiG/COQ3 family. As to quaternary structure, component of a multi-subunit COQ enzyme complex. The cofactor is Mg(2+).

Its subcellular location is the mitochondrion inner membrane. The catalysed reaction is a 3,4-dihydroxy-5-(all-trans-polyprenyl)benzoate + S-adenosyl-L-methionine = a 4-hydroxy-3-methoxy-5-(all-trans-polyprenyl)benzoate + S-adenosyl-L-homocysteine + H(+). It carries out the reaction a 3-demethylubiquinone + S-adenosyl-L-methionine = a ubiquinone + S-adenosyl-L-homocysteine. It catalyses the reaction a 3-demethylubiquinol + S-adenosyl-L-methionine = a ubiquinol + S-adenosyl-L-homocysteine + H(+). It participates in cofactor biosynthesis; ubiquinone biosynthesis. Its function is as follows. O-methyltransferase required for two non-consecutive steps during ubiquinone biosynthesis. Catalyzes the 2 O-methylation of 3,4-dihydroxy-5-(all-trans-polyprenyl)benzoic acid into 4-hydroxy-3-methoxy-5-(all-trans-polyprenyl)benzoic acid. Also catalyzes the last step of ubiquinone biosynthesis by mediating methylation of 3-demethylubiquinone into ubiquinone. Also able to mediate the methylation of 3-demethylubiquinol into ubiquinol. The polypeptide is Ubiquinone biosynthesis O-methyltransferase, mitochondrial (Dictyostelium discoideum (Social amoeba)).